Reading from the N-terminus, the 512-residue chain is Gasdermin-E (512 aa).

The tract at residues 1-56 (MFAKATRNFLKEVDAGGDLISVSHLNDSDKLQLLSLVTKKKRYWCWQRPKYQILSA) is membrane targeting domain. Cysteine 45 bears the S-(2-succinyl)cysteine mark. Residue lysine 120 forms a Glycyl lysine isopeptide (Lys-Gly) (interchain with G-Cter in ubiquitin) linkage. Cysteine 156, cysteine 168, and cysteine 180 each carry S-(2-succinyl)cysteine. A Glycyl lysine isopeptide (Lys-Gly) (interchain with G-Cter in ubiquitin) cross-link involves residue lysine 189. S-(2-succinyl)cysteine occurs at positions 235, 411, and 420.

Belongs to the gasdermin family. As to quaternary structure, homooligomer; homooligomeric ring-shaped pore complex containing 27-28 subunits when inserted in the membrane. In terms of processing, cleavage at Asp-270 by CASP3 (mature and uncleaved precursor forms) or granzyme B (GZMB) relieves autoinhibition and is sufficient to initiate pyroptosis. Succination by the Krebs cycle intermediate fumarate, which leads to S-(2-succinyl)cysteine residues, inhibits processing by caspases, and ability to initiate pyroptosis. Succination modification is catalyzed by a non-enzymatic reaction caused by an accumulation of fumarate. Post-translationally, ubiquitinated on Lys-120 and Lys-189 via 'Lys-48'-linked polyubiquitin chains, leading to proteasomal degradation. Deubiquitinated by USP48, leading to increased stability. In terms of processing, palmitoylated. As to expression, expressed in spleen, kidney, large and small intestine, testicle, stomach and by CD4(+)CD(8+) T cells in thymus. Expressed by macrophages.

The protein localises to the cell membrane. Its subcellular location is the cytoplasm. The protein resides in the cytosol. With respect to regulation, the full-length protein before cleavage is inactive: intramolecular interactions between N- and C-terminal domains mediate autoinhibition in the absence of activation signal. The intrinsic pyroptosis-inducing activity is carried by the released N-terminal moiety (Gasdermin-E, N-terminal) following cleavage by CASP3 or granzyme B (GZMB). Activated by NLRP1 in the absence of GSDMD expression: NLRP1 cleaves and activates CASP8, promoting downstream activation of CASP3 and subsequent activation of GSDME. In terms of biological role, precursor of a pore-forming protein that converts non-inflammatory apoptosis to pyroptosis. This form constitutes the precursor of the pore-forming protein: upon cleavage, the released N-terminal moiety (Gasdermin-E, N-terminal) binds to membranes and forms pores, triggering pyroptosis. Functionally, pore-forming protein produced by cleavage by CASP3 or granzyme B (GZMB), which converts non-inflammatory apoptosis to pyroptosis or promotes granzyme-mediated pyroptosis, respectively. After cleavage, moves to the plasma membrane, homooligomerizes within the membrane and forms pores of 10-15 nanometers (nm) of inner diameter, allowing the release of mature interleukins (IL1B and IL16) and triggering pyroptosis. Binds to inner leaflet lipids, bisphosphorylated phosphatidylinositols, such as phosphatidylinositol (4,5)-bisphosphate. Cleavage by CASP3 switches CASP3-mediated apoptosis induced by TNF or danger signals, such as chemotherapy drugs, to pyroptosis. Mediates secondary necrosis downstream of the mitochondrial apoptotic pathway and CASP3 activation as well as in response to viral agents. Exhibits bactericidal activity. Cleavage by GZMB promotes tumor suppressor activity by triggering robust anti-tumor immunity. Suppresses tumors by mediating granzyme-mediated pyroptosis in target cells of natural killer (NK) cells: cleavage by granzyme B (GZMB), delivered to target cells from NK-cells, triggers pyroptosis of tumor cells and tumor suppression. May play a role in the p53/TP53-regulated cellular response to DNA damage. This Mus musculus (Mouse) protein is Gasdermin-E.